The following is a 343-amino-acid chain: MAKTLDKSKKRKLVKSKSTNFDKKQKINKQQQQPESSTPYSSSSSSSDSSDSESDNEFDPEELRELLQPYSKDQLVDLVCSASRIGSSIYSAVVEAADRDVTHRKIFVYGLPWETTRETLVGVFEGYGEIEECTVVIDKATGKAKGFGFVMFKTRKGAKEALKEPKKRILNRTATCQLASMGPAASGKGHDQPGPVKISMGSMANHGQPQQQQVQGQHVFNGGGMAASPFMLGNQYHPLYGAGMLGNPALAAAAAAGGGYMYPMLAGALAHGGLGSDMVQSSQMGGIGVDPSVGAAGLSALGSYFRGQSLPSTYPDSDAGGKRGTGKDSDAGGSSFHGYSNYS.

Residues methionine 1 to glutamate 61 are disordered. Over residues asparagine 28–serine 49 the composition is skewed to low complexity. A compositionally biased stretch (acidic residues) spans serine 50 to glutamate 61. Residues arginine 104–methionine 181 form the RRM domain. The segment at serine 312–serine 343 is disordered. Residues alanine 319 to aspartate 330 show a composition bias toward basic and acidic residues.

Interacts with UBA1A, UBA2A, UBP1A, UBP1B and UBP1C.

It localises to the nucleus. Its function is as follows. Acts as a component of a complex regulating the turnover of mRNAs in the nucleus. Binds with high affinity to RNA molecules that contain U-rich sequences in 3'-UTRs. May function in complex with UBP1 and contribute to the stabilization of mRNAs in the nucleus. However, unlike UBP1, UBA1A does not stimulate pre-mRNA splicing. The sequence is that of UBP1-associated proteins 1A (UBA1A) from Arabidopsis thaliana (Mouse-ear cress).